A 767-amino-acid polypeptide reads, in one-letter code: MSHAVTIQEPQAQPQVSQTRYRERSRAGSHISSNRAYDFLYDPLFIVSSEKDHTQANIQATLIRSRLRKVPRFKTMFSNLIHYPRYSLYWSKSDPVPPFISRQWKGHEEKHREALRQLAITDTSFQMPREVYEDPEVTGKNRYKYFERPFLPFFQQMPFNVVYAISKAEPYTFPPTSTKQLSIPSKLTVGTQTDYRDADVQTDPYSPEYVVCQDSIPELLTLATLTWGRGLPAGQAEVEMIERAREKRAWEATLPALSDTSQFEKRRKMMNEMERKEWAFREQEIEKLQEIRLEVLKELLRKREENQNEVNMKHLNARWSKLQEAKEAKMATIQRTHVSTIRKLVGKGKNIEGKLERRNITKDYSDYASQVYGPLSRLGCFPDNNSEDFVVKNYYLNTYEGLVELESRLPDFVTQPRIRAPKPKVITTKAGFLKRAARLDYELAEVHKALLDKKNKVLEARKPPRFLQRNPIPQPRLPTPTLEMTSNEEEEIEMAVIYLQKLLRGRVIQNMMFEGKEKRLELIQELRTCHALQEDEKLVKKAEKQVTLALQRQRNLHEHKVSLVENHLAGLEGRALADMFDFLSKELVRLQEERRIHAFVMLAERQRRIREAEESGRRQVEKQRLREEDEIFKEVVKVHHSTISSYLEDIILNTEANTAEEQARAEIEKMAEKINDIAYEMESRRTYLQSEEIVAELVYSFLIPEVQKYFVKEKVRNAQRKHILAAHQIIHSCTESMVQKRLTEGQQDEASNAAMLLEKEIQNENNS.

Positions 1–29 (MSHAVTIQEPQAQPQVSQTRYRERSRAGS) are disordered. The segment covering 8-19 (QEPQAQPQVSQT) has biased composition (polar residues).

It belongs to the CFAP91 family. Part of a complex containing MYCBP, AKAP1 and PRKAR2B. Interacts with MYCBP and AKAP1. Interacts with CFAP61. Post-translationally, phosphorylated by PKA.

It localises to the cytoplasm. Its subcellular location is the mitochondrion. The protein localises to the cytoskeleton. The protein resides in the cilium axoneme. Its function is as follows. Involved in sperm flagellum axonemal organization and function. May regulate cilium motility through its role in the assembly of the axonemal radial spokes. This is Cilia- and flagella-associated protein 91 (CFAP91) from Macaca fascicularis (Crab-eating macaque).